Reading from the N-terminus, the 302-residue chain is MKLRDKWKIYLGLTTIKVQCPCFFLFHNDENRTTTSNLDSVKSKKKRRKTISDASIVSNGSLVSHPSIDKGKLSILKRYKMSHRLTAIDKLRPLTVLVAWKQLNIAMRPIFPQHRYTEQDKKNWKKKVIIEDLNFLVLRCICACEAISDFEELLGNMRIGLIIDISLLGMNSNESSFLHYLVEVWSIFYLEILPYIEATFLPVTFAKFEIAQLFEEPMKTYWLKKSANIDLKLFSIWVFRKFVVMPKLKKTNRFIEIPQLNTQQQILLVQMISIISLIKPQDESEDLLMNWLNELTLKFLYV.

This is an uncharacterized protein from Schizosaccharomyces pombe (strain 972 / ATCC 24843) (Fission yeast).